A 430-amino-acid polypeptide reads, in one-letter code: Adenylosuccinate synthetase (430 aa).

Residues 13–19 (GDEGKGK) and 41–43 (GHT) contribute to the GTP site. The active-site Proton acceptor is the Asp-14. The Mg(2+) site is built by Asp-14 and Gly-41. IMP is bound by residues 14–17 (DEGK), 39–42 (NAGH), Thr-130, Arg-144, Gln-225, Thr-240, and Arg-304. The Proton donor role is filled by His-42. Residue 300–306 (STTGRAR) coordinates substrate. Residues Arg-306, 332–334 (KLD), and 414–416 (STG) contribute to the GTP site.

The protein belongs to the adenylosuccinate synthetase family. In terms of assembly, homodimer. It depends on Mg(2+) as a cofactor.

It localises to the cytoplasm. The catalysed reaction is IMP + L-aspartate + GTP = N(6)-(1,2-dicarboxyethyl)-AMP + GDP + phosphate + 2 H(+). Its pathway is purine metabolism; AMP biosynthesis via de novo pathway; AMP from IMP: step 1/2. In terms of biological role, plays an important role in the de novo pathway of purine nucleotide biosynthesis. Catalyzes the first committed step in the biosynthesis of AMP from IMP. The chain is Adenylosuccinate synthetase from Pseudomonas putida (strain ATCC 700007 / DSM 6899 / JCM 31910 / BCRC 17059 / LMG 24140 / F1).